The chain runs to 421 residues: 3-oxoacyl-[acyl-carrier-protein] synthase 2 (421 aa).

The Ketosynthase family 3 (KS3) domain maps to 1–417 (MRRVVITGTG…GTNASLILRR (417 aa)). Active-site for beta-ketoacyl synthase activity residues include Cys170, His311, and His347.

Belongs to the thiolase-like superfamily. Beta-ketoacyl-ACP synthases family. In terms of assembly, homodimer.

The enzyme catalyses a fatty acyl-[ACP] + malonyl-[ACP] + H(+) = a 3-oxoacyl-[ACP] + holo-[ACP] + CO2. The catalysed reaction is (9Z)-hexadecenoyl-[ACP] + malonyl-[ACP] + H(+) = 3-oxo-(11Z)-octadecenoyl-[ACP] + holo-[ACP] + CO2. The protein operates within lipid metabolism; fatty acid biosynthesis. Its function is as follows. Involved in the type II fatty acid elongation cycle. Catalyzes the elongation of a wide range of acyl-ACP by the addition of two carbons from malonyl-ACP to an acyl acceptor. Can efficiently catalyze the conversion of palmitoleoyl-ACP (cis-hexadec-9-enoyl-ACP) to cis-vaccenoyl-ACP (cis-octadec-11-enoyl-ACP), an essential step in the thermal regulation of fatty acid composition. This Rhizobium meliloti (strain 1021) (Ensifer meliloti) protein is 3-oxoacyl-[acyl-carrier-protein] synthase 2 (fabF).